Consider the following 183-residue polypeptide: Thymidine kinase (183 aa).

Residue 11-18 coordinates ATP; that stretch reads GPMFSGKT. E89 (proton acceptor) is an active-site residue. F119 lines the substrate pocket. Positions 144 and 147 each coordinate Zn(2+). 163-167 lines the substrate pocket; that stretch reads VMDIG. Residues C176 and C179 each coordinate Zn(2+).

Belongs to the thymidine kinase family.

It carries out the reaction thymidine + ATP = dTMP + ADP + H(+). The chain is Thymidine kinase (TK) from Vertebrata (FPV).